A 498-amino-acid polypeptide reads, in one-letter code: Resveratrol cleavage oxygenase 1 (498 aa).

The piceatannol site is built by Tyr-105 and Lys-136. Positions 105 and 136 each coordinate trans-resveratrol. Residues His-169, His-220, and His-285 each coordinate Fe cation. Piceatannol is bound at residue Glu-355. Residue Glu-355 participates in trans-resveratrol binding. His-481 is a Fe cation binding site.

This sequence belongs to the carotenoid oxygenase family. Fe(2+) is required as a cofactor.

It catalyses the reaction trans-resveratrol + O2 = 3,5-dihydroxybenzaldehyde + 4-hydroxybenzaldehyde. It carries out the reaction piceatannol + O2 = 3,5-dihydroxybenzaldehyde + 3,4-dihydroxybenzaldehyde. In terms of biological role, dioxygenase that cleaves the interphenyl C-alpha-C-beta double bond of resveratrol to yield 3,5-dihydroxybenzaldehyde and 4-hydroxybenzaldehyde. Also cleaves piceatannol, a compound that differs from resveratrol only in the occurrence of an additional hydroxyl group, which leads to the production of 3,4-dihydroxybenzaldehyde and 3,5-hydroxybenzaldehyde. This Aspergillus fumigatus (strain ATCC MYA-4609 / CBS 101355 / FGSC A1100 / Af293) (Neosartorya fumigata) protein is Resveratrol cleavage oxygenase 1.